Here is a 555-residue protein sequence, read N- to C-terminus: Solute carrier family 22 member 2 (555 aa).

The Cytoplasmic portion of the chain corresponds to 1–22 (MPTTVDDVLEHGGEFHFFQKQM). The chain crosses the membrane as a helical span at residues 23 to 43 (FFLLALLSATFAPIYVGIVFL). At 44–150 (GFTPDHRCRS…LVCANSWMLD (107 aa)) the chain is on the extracellular side. N-linked (GlcNAc...) asparagine glycosylation occurs at N72. Residues 151-171 (LFQSSVNVGFFIGSMSIGYIA) traverse the membrane as a helical segment. At 172–177 (DRFGRK) the chain is on the cytoplasmic side. The chain crosses the membrane as a helical span at residues 178–198 (LCLLTTVLINAAAGVLMAISP). Topologically, residues 199 to 208 (TYTWMLIFRL) are extracellular. The chain crosses the membrane as a helical span at residues 209–229 (IQGLVSKAGWLIGYILITEFV). The Cytoplasmic segment spans residues 230 to 238 (GRRYRRTVG). The chain crosses the membrane as a helical span at residues 239 to 259 (IFYQVAYTVGLLVLAGVAYAL). The Extracellular portion of the chain corresponds to 260–263 (PHWR). The helical transmembrane segment at 264–284 (WLQFTVSLPNFFFLLYYWCIP) threads the bilayer. The short motif at 284-288 (PESPR) is the Proline-rich sequence element. At 285–348 (ESPRWLISQN…VRTPQIRKHT (64 aa)) the chain is on the cytoplasmic side. Residues 349–369 (MILMYNWFTSSVLYQGLIMHM) traverse the membrane as a helical segment. Residues 370–375 (GLAGDN) lie on the Extracellular side of the membrane. A helical transmembrane segment spans residues 376-396 (IYLDFFYSALVEFPAAFMIIL). The Cytoplasmic portion of the chain corresponds to 397–414 (TIDRIGRRYPWAASNMVA). The helical transmembrane segment at 415–435 (GAACLASVFIPGDLQWLKIII) threads the bilayer. Residues 436 to 441 (SCLGRM) lie on the Extracellular side of the membrane. Residues 442–462 (GITMAYEIVCLVNAELYPTFI) form a helical membrane-spanning segment. At 463–464 (RN) the chain is on the cytoplasmic side. A helical membrane pass occupies residues 465–485 (LGVHICSSMCDIGGIITPFLV). The Extracellular segment spans residues 486 to 494 (YRLTNIWLE). Residues 495–515 (LPLMVFGVLGLVAGGLVLLLP) form a helical membrane-spanning segment. Topologically, residues 516–555 (ETKGKALPETIEEAENMQRPRKNKEKMIYLQVQKLDIPLN) are cytoplasmic.

The protein belongs to the major facilitator (TC 2.A.1) superfamily. Organic cation transporter (TC 2.A.1.19) family. In terms of processing, tyrosine phosphorylated by tyrosine-protein kinase YES1. Mainly expressed in kidney, in the cortex and medulla. Localized in testis, mostly to peritubular myoid cells and Leydig cells and also detected along the basal membrane of Sertoli cells. Expressed in brain, in neurons of the cerebral cortex and in various subcortical nuclei. In the brain, also detected in the dopaminergic regions of the substantia nigra. Expressed in tracheal and bronchial ciliated epithelium in the respiratory tract. Also detected in secretory phase endometrium, in scattered stromal cells. Expressed in spleen, placenta, small intestine and spinal cord. Weakly expressed in prostate, uterus and lung. In terms of tissue distribution, mainly expressed in kidney, bone marrow and testis. Expressed in colon, skeletal muscle, spinal cord, placenta and liver.

It localises to the basolateral cell membrane. It is found in the basal cell membrane. The protein localises to the apical cell membrane. It catalyses the reaction (R)-noradrenaline(out) = (R)-noradrenaline(in). The catalysed reaction is (R)-adrenaline(out) = (R)-adrenaline(in). The enzyme catalyses serotonin(out) = serotonin(in). It carries out the reaction dopamine(out) = dopamine(in). It catalyses the reaction histamine(out) = histamine(in). The catalysed reaction is thiamine(in) = thiamine(out). The enzyme catalyses creatinine(in) = creatinine(out). It carries out the reaction 1-methylnicotinamide(out) = 1-methylnicotinamide(in). It catalyses the reaction guanidine(out) = guanidine(in). The catalysed reaction is choline(out) = choline(in). The enzyme catalyses agmatine(out) = agmatine(in). It carries out the reaction putrescine(out) = putrescine(in). It catalyses the reaction spermidine(in) = spermidine(out). The catalysed reaction is tyramine(in) = tyramine(out). The enzyme catalyses L-histidyl-L-proline diketopiperazine(in) = L-histidyl-L-proline diketopiperazine(out). It carries out the reaction (R)-salsolinol(in) = (R)-salsolinol(out). It catalyses the reaction N-methyl-(R)-salsolinol(in) = N-methyl-(R)-salsolinol(out). The catalysed reaction is acetylcholine(in) = acetylcholine(out). The enzyme catalyses prostaglandin F2alpha(out) = prostaglandin F2alpha(in). It carries out the reaction prostaglandin E2(out) = prostaglandin E2(in). Its activity is regulated as follows. Tyrosine phosphorylation of the transporter leads to activation of the transport activity. TEA uptake is activated by tyrosine phosphorylation. Inhibited by cGMP, most likely through a cGMP-binding protein that interacts with OCT2. Its function is as follows. Electrogenic voltage-dependent transporter that mediates the transport of a variety of organic cations such as endogenous bioactive amines, cationic drugs and xenobiotics. Functions as a Na(+)-independent, bidirectional uniporter. Cation cellular uptake or release is driven by the electrochemical potential, i.e. membrane potential and concentration gradient. However, may also engage electroneutral cation exchange when saturating concentrations of cation substrates are reached. Predominantly expressed at the basolateral membrane of hepatocytes and proximal tubules and involved in the uptake and disposition of cationic compounds by hepatic and renal clearance from the blood flow. Implicated in monoamine neurotransmitters uptake such as histamine, dopamine, adrenaline/epinephrine, noradrenaline/norepinephrine, serotonin and tyramine, thereby supporting a physiological role in the central nervous system by regulating interstitial concentrations of neurotransmitters. Also capable of transporting dopaminergic neuromodulators cyclo(his-pro), salsolinol and N-methyl-salsolinol, thereby involved in the maintenance of dopaminergic cell integrity in the central nervous system. Mediates the bidirectional transport of acetylcholine (ACh) at the apical membrane of ciliated cell in airway epithelium, thereby playing a role in luminal release of ACh from bronchial epithelium. Also transports guanidine and endogenous monoamines such as vitamin B1/thiamine, creatinine and N-1-methylnicotinamide (NMN). Mediates the uptake and efflux of quaternary ammonium compound choline. Mediates the bidirectional transport of polyamine agmatine and the uptake of polyamines putrescine and spermidine. Able to transport non-amine endogenous compounds such as prostaglandin E2 (PGE2) and prostaglandin F2-alpha (PGF2-alpha). Also involved in the uptake of xenobiotic 4-(4-(dimethylamino)styryl)-N-methylpyridinium (ASP). May contribute to regulate the transport of organic compounds in testis across the blood-testis-barrier. In contrast with isoform 1, not able to transport guanidine, creatinine, cimetidine and metformin. The chain is Solute carrier family 22 member 2 from Homo sapiens (Human).